Reading from the N-terminus, the 238-residue chain is ATP synthase subunit a (238 aa).

The next 5 helical transmembrane spans lie at 15-35, 76-96, 111-131, 167-187, and 208-230; these read IFNL…FVFI, YSLF…LGLM, PTAN…LTHI, LALR…LLLL, and AFSV…VYLG.

This sequence belongs to the ATPase A chain family. In terms of assembly, F-type ATPases have 2 components, CF(1) - the catalytic core - and CF(0) - the membrane proton channel. CF(1) has five subunits: alpha(3), beta(3), gamma(1), delta(1), epsilon(1). CF(0) has three main subunits: a(1), b(2) and c(9-12). The alpha and beta chains form an alternating ring which encloses part of the gamma chain. CF(1) is attached to CF(0) by a central stalk formed by the gamma and epsilon chains, while a peripheral stalk is formed by the delta and b chains.

It is found in the cell membrane. In terms of biological role, key component of the proton channel; it plays a direct role in the translocation of protons across the membrane. The sequence is that of ATP synthase subunit a from Streptococcus pneumoniae (strain 70585).